The following is a 480-amino-acid chain: Adenosylhomocysteinase (480 aa).

Substrate is bound by residues Thr-63, Asp-142, and Glu-203. 204 to 206 is an NAD(+) binding site; sequence TTT. Residues Lys-233 and Asp-237 each contribute to the substrate site. NAD(+) is bound by residues Asn-238, 267 to 272, Glu-290, Asn-325, 346 to 348, and Asn-394; these read GYGDVG and IGH.

The protein belongs to the adenosylhomocysteinase family. It depends on NAD(+) as a cofactor.

The protein resides in the cytoplasm. It catalyses the reaction S-adenosyl-L-homocysteine + H2O = L-homocysteine + adenosine. It functions in the pathway amino-acid biosynthesis; L-homocysteine biosynthesis; L-homocysteine from S-adenosyl-L-homocysteine: step 1/1. Its function is as follows. May play a key role in the regulation of the intracellular concentration of adenosylhomocysteine. This Xanthomonas campestris pv. campestris (strain 8004) protein is Adenosylhomocysteinase.